A 295-amino-acid chain; its full sequence is Cyclin-G1 (295 aa).

The protein belongs to the cyclin family. Cyclin G subfamily.

Its subcellular location is the nucleus. May play a role in growth regulation. Is associated with G2/M phase arrest in response to DNA damage. May be an intermediate by which p53 mediates its role as an inhibitor of cellular proliferation. The chain is Cyclin-G1 (CCNG1) from Sus scrofa (Pig).